The chain runs to 302 residues: UDP-N-acetylenolpyruvoylglucosamine reductase (302 aa).

An FAD-binding PCMH-type domain is found at 27–192 (KVGGAVDYLA…LSAKFALRPG (166 aa)). Arg171 is an active-site residue. The Proton donor role is filled by Ser221. Glu291 is an active-site residue.

This sequence belongs to the MurB family. Requires FAD as cofactor.

The protein localises to the cytoplasm. The enzyme catalyses UDP-N-acetyl-alpha-D-muramate + NADP(+) = UDP-N-acetyl-3-O-(1-carboxyvinyl)-alpha-D-glucosamine + NADPH + H(+). It functions in the pathway cell wall biogenesis; peptidoglycan biosynthesis. Its function is as follows. Cell wall formation. This chain is UDP-N-acetylenolpyruvoylglucosamine reductase, found in Streptococcus suis (strain 98HAH33).